A 168-amino-acid chain; its full sequence is Photosystem I assembly protein Ycf3 (168 aa).

TPR repeat units lie at residues 35–68, 72–105, and 120–153; these read AFTY…EIDP, SYIL…NPFL, and GEKA…TPGN.

Belongs to the Ycf3 family.

The protein resides in the plastid membrane. Essential for the assembly of the photosystem I (PSI) complex. May act as a chaperone-like factor to guide the assembly of the PSI subunits. In Cuscuta exaltata (Tall dodder), this protein is Photosystem I assembly protein Ycf3.